Consider the following 97-residue polypeptide: Putative CC-type chemokine U83 (97 aa).

2 disulfides stabilise this stretch: Cys32/Cys62 and Cys33/Cys76.

The protein belongs to the intercrine beta (chemokine CC) family. Highly divergent.

The polypeptide is Putative CC-type chemokine U83 (U83) (Human herpesvirus 6A (strain Uganda-1102) (HHV-6 variant A)).